We begin with the raw amino-acid sequence, 147 residues long: Hemoglobin subunit beta (147 aa).

N-acetylvaline is present on Val-2. The region spanning 3-147 (HLTGEEKAAV…VANALAHKYH (145 aa)) is the Globin domain. Phosphothreonine is present on Thr-13. Ser-45 is subject to Phosphoserine. Position 60 is an N6-acetyllysine (Lys-60). His-64 is a binding site for heme b. Lys-83 carries the N6-acetyllysine modification. His-93 is a heme b binding site. Cys-94 carries the post-translational modification S-nitrosocysteine. At Lys-145 the chain carries N6-acetyllysine.

Belongs to the globin family. In terms of assembly, heterotetramer of two alpha chains and two beta chains. As to expression, red blood cells.

Functionally, involved in oxygen transport from the lung to the various peripheral tissues. The sequence is that of Hemoglobin subunit beta (HBB) from Lagothrix lagotricha (Brown woolly monkey).